Reading from the N-terminus, the 112-residue chain is Peptidyl-prolyl cis-trans isomerase (112 aa).

A disordered region spans residues 1–22 (MGVEKQVISSGNGQDFPKPGDR). A PPIase FKBP-type domain is found at 20-108 (GDRITMHYTG…LFDVELLAIN (89 aa)).

This sequence belongs to the FKBP-type PPIase family. FKBP1 subfamily.

Its subcellular location is the cytoplasm. It localises to the nucleus. The catalysed reaction is [protein]-peptidylproline (omega=180) = [protein]-peptidylproline (omega=0). Its function is as follows. PPIases accelerate the folding of proteins. It catalyzes the cis-trans isomerization of proline imidic peptide bonds in oligopeptides. Has an important role in sexual development and serves as the target for rapamycin action. This chain is Peptidyl-prolyl cis-trans isomerase (fkh1), found in Schizosaccharomyces pombe (strain 972 / ATCC 24843) (Fission yeast).